Consider the following 484-residue polypeptide: tRNA sulfurtransferase (484 aa).

The THUMP domain maps to 63–167 (QAFGERLACI…GDKLYMVTKR (105 aa)). ATP contacts are provided by residues 185–186 (LI), Lys267, Gly289, and Gln298. Cys346 and Cys458 are oxidised to a cystine. A Rhodanese domain is found at 406-484 (IDTNEVVIDI…GYHNVKVYRP (79 aa)). Cys458 functions as the Cysteine persulfide intermediate in the catalytic mechanism.

Belongs to the ThiI family.

It is found in the cytoplasm. It carries out the reaction [ThiI sulfur-carrier protein]-S-sulfanyl-L-cysteine + a uridine in tRNA + 2 reduced [2Fe-2S]-[ferredoxin] + ATP + H(+) = [ThiI sulfur-carrier protein]-L-cysteine + a 4-thiouridine in tRNA + 2 oxidized [2Fe-2S]-[ferredoxin] + AMP + diphosphate. The enzyme catalyses [ThiS sulfur-carrier protein]-C-terminal Gly-Gly-AMP + S-sulfanyl-L-cysteinyl-[cysteine desulfurase] + AH2 = [ThiS sulfur-carrier protein]-C-terminal-Gly-aminoethanethioate + L-cysteinyl-[cysteine desulfurase] + A + AMP + 2 H(+). Its pathway is cofactor biosynthesis; thiamine diphosphate biosynthesis. Functionally, catalyzes the ATP-dependent transfer of a sulfur to tRNA to produce 4-thiouridine in position 8 of tRNAs, which functions as a near-UV photosensor. Also catalyzes the transfer of sulfur to the sulfur carrier protein ThiS, forming ThiS-thiocarboxylate. This is a step in the synthesis of thiazole, in the thiamine biosynthesis pathway. The sulfur is donated as persulfide by IscS. The sequence is that of tRNA sulfurtransferase from Shewanella sp. (strain MR-4).